A 405-amino-acid chain; its full sequence is L-carnitine CoA-transferase (405 aa).

CoA-binding residues include Lys97 and Arg104. Residue Asp169 is the Nucleophile of the active site.

It belongs to the CoA-transferase III family. CaiB subfamily. In terms of assembly, homodimer.

It localises to the cytoplasm. It catalyses the reaction crotonobetainyl-CoA + (R)-carnitine = crotonobetaine + (R)-carnitinyl-CoA. The enzyme catalyses 4-(trimethylamino)butanoyl-CoA + (R)-carnitine = (R)-carnitinyl-CoA + 4-(trimethylamino)butanoate. Its pathway is amine and polyamine metabolism; carnitine metabolism. Catalyzes the reversible transfer of the CoA moiety from gamma-butyrobetainyl-CoA to L-carnitine to generate L-carnitinyl-CoA and gamma-butyrobetaine. Is also able to catalyze the reversible transfer of the CoA moiety from gamma-butyrobetainyl-CoA or L-carnitinyl-CoA to crotonobetaine to generate crotonobetainyl-CoA. In Shigella flexneri serotype 5b (strain 8401), this protein is L-carnitine CoA-transferase.